The chain runs to 452 residues: Phosphoglucosamine mutase (452 aa).

Serine 108 serves as the catalytic Phosphoserine intermediate. Residues serine 108, aspartate 247, aspartate 249, and aspartate 251 each coordinate Mg(2+). Serine 108 carries the phosphoserine modification.

This sequence belongs to the phosphohexose mutase family. The cofactor is Mg(2+). Activated by phosphorylation.

The catalysed reaction is alpha-D-glucosamine 1-phosphate = D-glucosamine 6-phosphate. In terms of biological role, catalyzes the conversion of glucosamine-6-phosphate to glucosamine-1-phosphate. The sequence is that of Phosphoglucosamine mutase from Burkholderia pseudomallei (strain K96243).